A 243-amino-acid chain; its full sequence is ATP synthase subunit b, mitochondrial (243 aa).

The protein belongs to the eukaryotic ATPase B chain family. F-type ATPases have 2 components, CF(1) - the catalytic core - and CF(0) - the membrane proton channel. CF(1) has five subunits: alpha(3), beta(3), gamma(1), delta(1), epsilon(1). CF(0) has three main subunits: a, b and c.

It is found in the mitochondrion. The protein resides in the mitochondrion inner membrane. Functionally, mitochondrial membrane ATP synthase (F(1)F(0) ATP synthase or Complex V) produces ATP from ADP in the presence of a proton gradient across the membrane which is generated by electron transport complexes of the respiratory chain. F-type ATPases consist of two structural domains, F(1) - containing the extramembraneous catalytic core, and F(0) - containing the membrane proton channel, linked together by a central stalk and a peripheral stalk. During catalysis, ATP synthesis in the catalytic domain of F(1) is coupled via a rotary mechanism of the central stalk subunits to proton translocation. Part of the complex F(0) domain and the peripheric stalk, which acts as a stator to hold the catalytic alpha(3)beta(3) subcomplex and subunit a/ATP6 static relative to the rotary elements. This is ATP synthase subunit b, mitochondrial from Drosophila melanogaster (Fruit fly).